Here is a 281-residue protein sequence, read N- to C-terminus: Putative outer membrane protein BBA52 (281 aa).

The segment at lysine 162–isoleucine 281 is disordered. A compositionally biased stretch (polar residues) spans asparagine 179–proline 196. Residues glutamate 219 to glutamate 249 show a composition bias toward acidic residues. Residues arginine 250–threonine 262 show a composition bias toward basic and acidic residues. The segment covering phenylalanine 263 to isoleucine 281 has biased composition (acidic residues).

Its subcellular location is the cell outer membrane. The chain is Putative outer membrane protein BBA52 from Borreliella burgdorferi (strain ATCC 35210 / DSM 4680 / CIP 102532 / B31) (Borrelia burgdorferi).